The following is a 440-amino-acid chain: Cell division protein FtsA (440 aa).

The interval 396 to 440 (VSSSEEQEQHHHQNEVQQRPKGKQKTQAEHNKQSKMKKLLSMFWE) is disordered.

The protein belongs to the FtsA/MreB family. As to quaternary structure, homodimer. Interacts with FtsZ.

Its subcellular location is the cell membrane. Functionally, cell division protein that is required for the assembly of the Z ring. May serve as a membrane anchor for the Z ring. Binds and hydrolyzes ATP. Also involved in sporulation. This Bacillus subtilis (strain 168) protein is Cell division protein FtsA.